A 349-amino-acid chain; its full sequence is Probable sugar phosphate/phosphate translocator At5g25400 (349 aa).

Helical transmembrane passes span 15-35, 49-69, 89-109, 113-133, 141-161, 165-185, 205-225, 236-256, 263-283, and 286-306; these read IIIS…VIVY, FPIS…FLLI, VVPI…AYIY, SFIQ…GVLF, ETMM…YGEA, VWGV…LVMI, VAPC…FPIL, LIFG…FLLV, TMNV…WSVI, and TVTP…AYYN. The EamA domain maps to 38–156; it reads YILDKKMYDW…LSISFGVAIA (119 aa). A disordered region spans residues 321–349; it reads TAQQVDEETGRLLEEREGNEGGRKNEPED. The span at 328–349 shows a compositional bias: basic and acidic residues; the sequence is ETGRLLEEREGNEGGRKNEPED.

The protein belongs to the TPT transporter family. TPT (TC 2.A.7.9) subfamily.

The protein localises to the membrane. The sequence is that of Probable sugar phosphate/phosphate translocator At5g25400 from Arabidopsis thaliana (Mouse-ear cress).